A 360-amino-acid chain; its full sequence is Peptide chain release factor 1 (360 aa).

Position 236 is an N5-methylglutamine (glutamine 236).

The protein belongs to the prokaryotic/mitochondrial release factor family. Post-translationally, methylated by PrmC. Methylation increases the termination efficiency of RF1.

It is found in the cytoplasm. In terms of biological role, peptide chain release factor 1 directs the termination of translation in response to the peptide chain termination codons UAG and UAA. This Lactiplantibacillus plantarum (strain ATCC BAA-793 / NCIMB 8826 / WCFS1) (Lactobacillus plantarum) protein is Peptide chain release factor 1.